We begin with the raw amino-acid sequence, 206 residues long: Small ribosomal subunit protein uS4 (206 aa).

The S4 RNA-binding domain maps to 96-156 (TRLDNVVYRM…EKSRTQARIK (61 aa)).

This sequence belongs to the universal ribosomal protein uS4 family. Part of the 30S ribosomal subunit. Contacts protein S5. The interaction surface between S4 and S5 is involved in control of translational fidelity.

In terms of biological role, one of the primary rRNA binding proteins, it binds directly to 16S rRNA where it nucleates assembly of the body of the 30S subunit. Functionally, with S5 and S12 plays an important role in translational accuracy. This Shewanella sp. (strain ANA-3) protein is Small ribosomal subunit protein uS4.